The sequence spans 32 residues: YGNFPTCSETGEDCSAMHCCRSMTCRNNICAD.

A 4-hydroxyproline modification is found at Pro5. Cystine bridges form between Cys7-Cys20, Cys14-Cys25, and Cys19-Cys30.

Expressed by the venom duct.

It localises to the secreted. The protein is Conotoxin pr6d of Conus parius (Cone snail).